The chain runs to 100 residues: Urease subunit gamma (100 aa).

This sequence belongs to the urease gamma subunit family. As to quaternary structure, heterotrimer of UreA (gamma), UreB (beta) and UreC (alpha) subunits. Three heterotrimers associate to form the active enzyme.

It is found in the cytoplasm. It carries out the reaction urea + 2 H2O + H(+) = hydrogencarbonate + 2 NH4(+). Its pathway is nitrogen metabolism; urea degradation; CO(2) and NH(3) from urea (urease route): step 1/1. The polypeptide is Urease subunit gamma (Synechococcus sp. (strain CC9902)).